The following is a 952-amino-acid chain: Probable outer membrane protein pmp16 (952 aa).

An N-terminal signal peptide occupies residues methionine 1–tyrosine 27. Positions glycine 646 to phenylalanine 952 constitute an Autotransporter domain.

This sequence belongs to the PMP outer membrane protein family.

It localises to the secreted. It is found in the cell wall. The protein resides in the cell outer membrane. In Chlamydia pneumoniae (Chlamydophila pneumoniae), this protein is Probable outer membrane protein pmp16 (pmp16).